The primary structure comprises 387 residues: 3-hydroxyisobutyryl-CoA hydrolase-like protein 5 (387 aa).

Ala2 is modified (N-acetylalanine).

It belongs to the enoyl-CoA hydratase/isomerase family.

This chain is 3-hydroxyisobutyryl-CoA hydrolase-like protein 5, found in Arabidopsis thaliana (Mouse-ear cress).